Reading from the N-terminus, the 200-residue chain is Phospholipase A2 inhibitor CNF (200 aa).

The N-terminal stretch at 1-19 (MKYLHTICLLFIFVARGNS) is a signal peptide. Cystine bridges form between Cys22–Cys46, Cys25–Cys32, Cys39–Cys67, Cys73–Cys94, Cys95–Cys100, Cys118–Cys143, Cys136–Cys165, and Cys169–Cys191. Asn176 is a glycosylation site (N-linked (GlcNAc...) asparagine; partial).

In terms of assembly, occurs as a mixture of oligomers. Tetrameric arrangement appears to be the predominant quaternary structure. Interacts with phospholipase A2 crotoxin basic subunit CBd; the interaction leads to dissociation of the CA-CB heterodimer and to inhibition of PLA2 activity of the CB subunit. In terms of processing, the carbohydrate moiety increases the inhibition capacity of CNF, but is not essential for activity and for oligomerization. As to expression, expressed by the liver.

The protein localises to the secreted. Its function is as follows. Inhibits the PLA2 activity of crotoxin (CTX) by replacing the acid subunit (CA) in the CTX complex. Displays a pro-inflammatory action through activation of important main signaling pathways for human leukocytes, in vitro. Abolishes both the muscle-paralyzing and muscle-damaging activities of CTX in mice phrenic nerve-diaphragm muscle preparations. This chain is Phospholipase A2 inhibitor CNF, found in Crotalus durissus terrificus (South American rattlesnake).